The chain runs to 400 residues: Iron(III) enterobactin esterase (400 aa).

This sequence belongs to the Fes family. In terms of assembly, monomer.

The protein resides in the cytoplasm. The catalysed reaction is Fe(III)-enterobactin + 3 H2O + H(+) = Fe(III)-[N-(2,3-dihydroxybenzoyl)-L-serine] + 2 N-(2,3-dihydroxybenzoyl)-L-serine. It carries out the reaction Fe(III)-enterobactin + H2O = Fe(III)-[N-(2,3-dihydroxybenzoyl)-L-serine]3 + H(+). The enzyme catalyses Fe(III)-[N-(2,3-dihydroxybenzoyl)-L-serine]3 + H2O + H(+) = Fe(III)-[N-(2,3-dihydroxybenzoyl)-L-serine]2 + N-(2,3-dihydroxybenzoyl)-L-serine. It catalyses the reaction Fe(III)-[N-(2,3-dihydroxybenzoyl)-L-serine]2 + H2O + H(+) = Fe(III)-[N-(2,3-dihydroxybenzoyl)-L-serine] + N-(2,3-dihydroxybenzoyl)-L-serine. The catalysed reaction is enterobactin + 3 H2O = 3 N-(2,3-dihydroxybenzoyl)-L-serine + 2 H(+). With respect to regulation, inhibited by N-ethylmaleimide. Its function is as follows. Catalyzes the hydrolysis of ferric enterobactin (Fe-Ent). Is responsible for the release of iron from ferric enterobactin. Also catalyzes the hydrolysis of iron-free enterobactin (Ent). Cleavage of ferric enterobactin results in a mixture of three hydrolysis products, 2,3-dihydroxybenzoylserine (DHBS), the linear dimer (DHBS)2 and the linear trimer (DHBS)3, while cleavage of iron-free enterobactin yields only the monomer. Hydrolysis of ferric enterobactin is less efficient than hydrolysis of unliganded enterobactin. It also cleaves the aluminum (III) complex at a rate similar to the ferric complex. This is Iron(III) enterobactin esterase from Escherichia coli (strain K12).